A 25-amino-acid polypeptide reads, in one-letter code: APVENQGSFPKMFPRGSHWAVGHLM.

M25 bears the Methionine amide mark.

This sequence belongs to the bombesin/neuromedin-B/ranatensin family.

The protein localises to the secreted. It is found in the cytoplasmic vesicle. Its subcellular location is the secretory vesicle lumen. Stimulates the release of gastrin and other gastrointestinal hormones. This chain is Gastrin-releasing peptide (grp), found in Scyliorhinus canicula (Small-spotted catshark).